Here is a 364-residue protein sequence, read N- to C-terminus: Aminomethyltransferase (364 aa).

The protein belongs to the GcvT family. As to quaternary structure, the glycine cleavage system is composed of four proteins: P, T, L and H.

The enzyme catalyses N(6)-[(R)-S(8)-aminomethyldihydrolipoyl]-L-lysyl-[protein] + (6S)-5,6,7,8-tetrahydrofolate = N(6)-[(R)-dihydrolipoyl]-L-lysyl-[protein] + (6R)-5,10-methylene-5,6,7,8-tetrahydrofolate + NH4(+). Its function is as follows. The glycine cleavage system catalyzes the degradation of glycine. This is Aminomethyltransferase from Shewanella baltica (strain OS195).